The primary structure comprises 313 residues: Type II methyltransferase M.NlaX (313 aa).

Residues 2–308 (FKIIDLFAGI…EQMKAALSAV (307 aa)) form the SAM-dependent MTase C5-type domain. Residue Cys74 is part of the active site.

This sequence belongs to the class I-like SAM-binding methyltransferase superfamily. C5-methyltransferase family.

It catalyses the reaction a 2'-deoxycytidine in DNA + S-adenosyl-L-methionine = a 5-methyl-2'-deoxycytidine in DNA + S-adenosyl-L-homocysteine + H(+). Functionally, a methylase, recognizes the double-stranded sequence 5'-CCNGG-3' and methylates C-2 on both strands. May be the equivalent of dcm in this bacteria, or it may protect the DNA from cleavage by the putative NlaXP endonuclease. This chain is Type II methyltransferase M.NlaX (nlaXM), found in Neisseria lactamica.